The sequence spans 317 residues: Cytochrome c biogenesis protein CcsA (317 aa).

8 helical membrane-spanning segments follow: residues 17 to 37 (VVSI…IVGL), 44 to 64 (GMIV…IYSG), 71 to 91 (LYES…LPYL), 101 to 121 (ITSP…LTQI), 143 to 163 (MILS…LLVI), 223 to 243 (IISI…VWAN), 252 to 272 (WDPK…YLHI), and 284 to 304 (AIVA…INIL).

It belongs to the CcmF/CycK/Ccl1/NrfE/CcsA family. May interact with Ccs1.

Its subcellular location is the plastid. The protein localises to the chloroplast thylakoid membrane. In terms of biological role, required during biogenesis of c-type cytochromes (cytochrome c6 and cytochrome f) at the step of heme attachment. The polypeptide is Cytochrome c biogenesis protein CcsA (Pelargonium hortorum (Common geranium)).